The sequence spans 203 residues: Ribosomal RNA large subunit methyltransferase E (203 aa).

S-adenosyl-L-methionine-binding residues include Gly51, Trp53, Asp69, Asp85, and Asp108. Catalysis depends on Lys148, which acts as the Proton acceptor.

Belongs to the class I-like SAM-binding methyltransferase superfamily. RNA methyltransferase RlmE family.

It localises to the cytoplasm. It carries out the reaction uridine(2552) in 23S rRNA + S-adenosyl-L-methionine = 2'-O-methyluridine(2552) in 23S rRNA + S-adenosyl-L-homocysteine + H(+). In terms of biological role, specifically methylates the uridine in position 2552 of 23S rRNA at the 2'-O position of the ribose in the fully assembled 50S ribosomal subunit. The protein is Ribosomal RNA large subunit methyltransferase E of Methanosphaerula palustris (strain ATCC BAA-1556 / DSM 19958 / E1-9c).